Consider the following 284-residue polypeptide: 2-dehydro-3-deoxyphosphooctonate aldolase (284 aa).

The protein belongs to the KdsA family.

The protein localises to the cytoplasm. It catalyses the reaction D-arabinose 5-phosphate + phosphoenolpyruvate + H2O = 3-deoxy-alpha-D-manno-2-octulosonate-8-phosphate + phosphate. Its pathway is carbohydrate biosynthesis; 3-deoxy-D-manno-octulosonate biosynthesis; 3-deoxy-D-manno-octulosonate from D-ribulose 5-phosphate: step 2/3. The protein operates within bacterial outer membrane biogenesis; lipopolysaccharide biosynthesis. This Salmonella paratyphi A (strain ATCC 9150 / SARB42) protein is 2-dehydro-3-deoxyphosphooctonate aldolase.